We begin with the raw amino-acid sequence, 433 residues long: Glutamate-1-semialdehyde 2,1-aminomutase (433 aa).

At Lys273 the chain carries N6-(pyridoxal phosphate)lysine.

It belongs to the class-III pyridoxal-phosphate-dependent aminotransferase family. HemL subfamily. In terms of assembly, homodimer. It depends on pyridoxal 5'-phosphate as a cofactor.

It is found in the cytoplasm. The enzyme catalyses (S)-4-amino-5-oxopentanoate = 5-aminolevulinate. It participates in porphyrin-containing compound metabolism; protoporphyrin-IX biosynthesis; 5-aminolevulinate from L-glutamyl-tRNA(Glu): step 2/2. It functions in the pathway porphyrin-containing compound metabolism; chlorophyll biosynthesis. The sequence is that of Glutamate-1-semialdehyde 2,1-aminomutase from Crocosphaera subtropica (strain ATCC 51142 / BH68) (Cyanothece sp. (strain ATCC 51142)).